We begin with the raw amino-acid sequence, 341 residues long: Anthranilate phosphoribosyltransferase (341 aa).

5-phospho-alpha-D-ribose 1-diphosphate is bound by residues G81, 84–85, T89, 91–94, 109–117, and S121; these read GD, NIST, and KHGSRSVSG. G81 lines the anthranilate pocket. S93 lines the Mg(2+) pocket. R167 is an anthranilate binding site. 2 residues coordinate Mg(2+): D226 and E227.

Belongs to the anthranilate phosphoribosyltransferase family. Homodimer. The cofactor is Mg(2+).

It carries out the reaction N-(5-phospho-beta-D-ribosyl)anthranilate + diphosphate = 5-phospho-alpha-D-ribose 1-diphosphate + anthranilate. It functions in the pathway amino-acid biosynthesis; L-tryptophan biosynthesis; L-tryptophan from chorismate: step 2/5. Its function is as follows. Catalyzes the transfer of the phosphoribosyl group of 5-phosphorylribose-1-pyrophosphate (PRPP) to anthranilate to yield N-(5'-phosphoribosyl)-anthranilate (PRA). The polypeptide is Anthranilate phosphoribosyltransferase (Methylococcus capsulatus (strain ATCC 33009 / NCIMB 11132 / Bath)).